A 254-amino-acid polypeptide reads, in one-letter code: tRNA (guanine-N(1)-)-methyltransferase (254 aa).

S-adenosyl-L-methionine contacts are provided by residues glycine 112 and 131–136 (IGDFIL).

It belongs to the RNA methyltransferase TrmD family. As to quaternary structure, homodimer.

It is found in the cytoplasm. The enzyme catalyses guanosine(37) in tRNA + S-adenosyl-L-methionine = N(1)-methylguanosine(37) in tRNA + S-adenosyl-L-homocysteine + H(+). In terms of biological role, specifically methylates guanosine-37 in various tRNAs. This is tRNA (guanine-N(1)-)-methyltransferase from Persephonella marina (strain DSM 14350 / EX-H1).